The chain runs to 316 residues: Fe-S cluster assembly protein DRE2 (316 aa).

The segment at 7-139 is N-terminal SAM-like domain; it reads VSPPKRTLLL…PDYGDNEGAV (133 aa). The segment at 140–208 is linker; the sequence is TLKFGLKKKN…EDTLMTEEDL (69 aa). [2Fe-2S] cluster is bound by residues Cys-218, Cys-229, Cys-232, and Cys-234. The tract at residues 218-234 is fe-S binding site A; that stretch reads CQPKAGKRRRACKDCSC. [4Fe-4S] cluster-binding residues include Cys-279, Cys-282, Cys-290, and Cys-293. 2 consecutive short sequence motifs (cx2C motif) follow at residues 279-282 and 290-293; these read CGNC and CDGC. A fe-S binding site B region spans residues 279 to 293; it reads CGNCSLGDAFRCDGC.

Belongs to the anamorsin family. As to quaternary structure, monomer. Interacts with TAH18. Interacts with MIA40. [2Fe-2S] cluster serves as cofactor. The cofactor is [4Fe-4S] cluster.

The protein resides in the cytoplasm. The protein localises to the mitochondrion intermembrane space. Component of the cytosolic iron-sulfur (Fe-S) protein assembly (CIA) machinery required for the maturation of extramitochondrial Fe-S proteins. Part of an electron transfer chain functioning in an early step of cytosolic Fe-S biogenesis, facilitating the de novo assembly of a [4Fe-4S] cluster on the scaffold complex CFD1-NBP35. Electrons are transferred to DRE2 from NADPH via the FAD- and FMN-containing protein TAH18. TAH18-DRE2 are also required for the assembly of the diferric tyrosyl radical cofactor of ribonucleotide reductase (RNR), probably by providing electrons for reduction during radical cofactor maturation in the catalytic small subunit RNR2. The chain is Fe-S cluster assembly protein DRE2 from Fusarium vanettenii (strain ATCC MYA-4622 / CBS 123669 / FGSC 9596 / NRRL 45880 / 77-13-4) (Fusarium solani subsp. pisi).